Consider the following 186-residue polypeptide: MTWIGLLIVGLTAIAVQGEVPIVTRAEWNAKPPNGAIDSMETPLPRAVIAHTAGGACADDVTCSQHMQNLQNFQMSKQKFSDIGYHYLIGGNGKVYEGRSPSQRGAFAGPNNDGSLGIAFIGNFEERAPNKEALDAAKELLEQAVKQAQLVEGYKLLGHRQVSATKSPGEALYALIQQWPNWSEEM.

An N-terminal signal peptide occupies residues 1–18 (MTWIGLLIVGLTAIAVQG). The N-acetylmuramoyl-L-alanine amidase domain maps to 47–169 (AVIAHTAGGA…RQVSATKSPG (123 aa)). A disulfide bond links Cys-57 and Cys-63. The N-linked (GlcNAc...) asparagine glycan is linked to Asn-181.

This sequence belongs to the N-acetylmuramoyl-L-alanine amidase 2 family. In terms of tissue distribution, in larvae, it is mainly expressed in fat body. Also expressed in uninduced hemocytes and mbn-2 cells.

The protein localises to the secreted. In terms of biological role, peptidoglycan-recognition protein that plays a key role in innate immunity by binding to peptidoglycans (PGN) of Gram-positive bacteria and activating the Toll pathway. Has no activity against on Gram-negative bacteria and fungi. Shows some partial redundancy with PRPGP-SA in Gram-positive bacteria recognition. May act by activating the proteolytic cleavage of Spatzle and the subsequent activation of Toll pathway. Recognizes S.aureus PGN. In Drosophila melanogaster (Fruit fly), this protein is Peptidoglycan-recognition protein SD (PGRP-SD).